Reading from the N-terminus, the 364-residue chain is Very-long-chain (3R)-3-hydroxyacyl-CoA dehydratase 3 (364 aa).

Residues 1–151 (MAMENQVLTP…ETLTNLRKGY (151 aa)) are Cytoplasmic-facing. One can recognise a CS domain in the interval 7-96 (VLTPHVYWAQ…KVSQWWERLT (90 aa)). T9 bears the Phosphothreonine mark. Positions 113-138 (LDESDAEMELRAKEEERLNKLRLESE) form a coiled coil. Phosphoserine is present on residues S116 and S137. The helical transmembrane segment at 152 to 172 (LFMYNLVQFLGFSWIFVNLTV) threads the bilayer. At 173 to 191 (RFCILGKESFYDTFHTVAD) the chain is on the lumenal side. Residues 192–212 (MMYFCQMLAVVETINAAIGVT) traverse the membrane as a helical segment. Over 213-214 (TS) the chain is Cytoplasmic. The chain crosses the membrane as a helical span at residues 215–235 (PVLPSLIQLLGRNFILFIIFG). Topologically, residues 236-244 (TMEEMQNKA) are lumenal. A helical membrane pass occupies residues 245–265 (VVFFVFYLWSAIEIFRYSFYM). Residues 266–282 (LTCIDMDWEVLTWLRYT) lie on the Cytoplasmic side of the membrane. A helical transmembrane segment spans residues 283–303 (LWIPLYPLGCLAEAVSVVQSI). Residues Y288 and E295 contribute to the active site. The Lumenal portion of the chain corresponds to 304-324 (PIFNETGRFSFTLPYPVKIKV). Residues 325–345 (RFSFFLQIYLIMIFLGLYINF) form a helical membrane-spanning segment. Topologically, residues 346-364 (RHLYKQRRRRYGQKKKKIH) are cytoplasmic.

This sequence belongs to the very long-chain fatty acids dehydratase HACD family. May interact with enzymes of the ELO family (including ELOVL1); with those enzymes that mediate condensation, the first of the four steps of the reaction cycle responsible for fatty acids elongation, may be part of a larger fatty acids elongase complex. Interacts with RAC1.

It localises to the endoplasmic reticulum membrane. It catalyses the reaction a very-long-chain (3R)-3-hydroxyacyl-CoA = a very-long-chain (2E)-enoyl-CoA + H2O. The enzyme catalyses (3R)-hydroxyhexadecanoyl-CoA = (2E)-hexadecenoyl-CoA + H2O. Its pathway is lipid metabolism; fatty acid biosynthesis. Functionally, catalyzes the third of the four reactions of the long-chain fatty acids elongation cycle. This endoplasmic reticulum-bound enzymatic process, allows the addition of two carbons to the chain of long- and very long-chain fatty acids/VLCFAs per cycle. This enzyme catalyzes the dehydration of the 3-hydroxyacyl-CoA intermediate into trans-2,3-enoyl-CoA, within each cycle of fatty acid elongation. Thereby, it participates in the production of VLCFAs of different chain lengths that are involved in multiple biological processes as precursors of membrane lipids and lipid mediators. Involved in Rac1-signaling pathways leading to the modulation of gene expression. This Pongo abelii (Sumatran orangutan) protein is Very-long-chain (3R)-3-hydroxyacyl-CoA dehydratase 3.